A 39-amino-acid chain; its full sequence is Cytochrome b6-f complex subunit 5 (39 aa).

A helical transmembrane segment spans residues 5–25 (LLCGIVLGLVPITLLGLFVSA).

This sequence belongs to the PetG family. In terms of assembly, the 4 large subunits of the cytochrome b6-f complex are cytochrome b6, subunit IV (17 kDa polypeptide, PetD), cytochrome f and the Rieske protein, while the 4 small subunits are PetG, PetL, PetM and PetN. The complex functions as a dimer.

The protein localises to the cellular thylakoid membrane. In terms of biological role, component of the cytochrome b6-f complex, which mediates electron transfer between photosystem II (PSII) and photosystem I (PSI), cyclic electron flow around PSI, and state transitions. PetG is required for either the stability or assembly of the cytochrome b6-f complex. The protein is Cytochrome b6-f complex subunit 5 of Prochlorococcus marinus (strain MIT 9515).